The primary structure comprises 490 residues: Metalloreductase STEAP2 (490 aa).

NADP(+) contacts are provided by residues 38–41, 60–61, 93–100, asparagine 118, and alanine 151; these read SGDF, SR, and IHREHYTS. The FAD site is built by tryptophan 152 and aspartate 160. A helical membrane pass occupies residues 208–228; the sequence is LFTLWRGPVVVAISLATFFFL. Tyrosine 229 provides a ligand contact to Fe(3+). Residues 259 to 279 form a helical membrane-spanning segment; the sequence is LPIVAITLLSLVYLAGLLAAA. In terms of domain architecture, Ferric oxidoreductase spans 259–407; that stretch reads LPIVAITLLS…LGYVALLIST (149 aa). FAD contacts are provided by glutamine 281 and arginine 302. Helical transmembrane passes span 305 to 325, 359 to 379, 393 to 413, and 432 to 452; these read LGLL…CLPM, MYIS…VTSI, FIQS…VLIY, and FVLA…LFLP. Histidine 316 lines the heme b pocket. Position 319 (tyrosine 319) interacts with Fe(3+). Positions 378 and 395 each coordinate FAD. Residue histidine 409 coordinates heme b. Serine 483 bears the Phosphoserine mark.

Belongs to the STEAP family. FAD serves as cofactor. Heme b is required as a cofactor. Expressed at high levels in prostate and at significantly lower levels in heart, brain, kidney, pancreas, and ovary.

It is found in the endosome membrane. Its subcellular location is the cell membrane. The catalysed reaction is 2 Fe(2+) + NADP(+) + H(+) = 2 Fe(3+) + NADPH. The enzyme catalyses 2 Cu(+) + NADP(+) + H(+) = 2 Cu(2+) + NADPH. Its function is as follows. Integral membrane protein that functions as a NADPH-dependent ferric-chelate reductase, using NADPH from one side of the membrane to reduce a Fe(3+) chelate that is bound on the other side of the membrane. Mediates sequential transmembrane electron transfer from NADPH to FAD and onto heme, and finally to the Fe(3+) chelate. Can also reduce Cu(2+) to Cu(1+). In Homo sapiens (Human), this protein is Metalloreductase STEAP2 (STEAP2).